The chain runs to 63 residues: Large ribosomal subunit protein bL28c (63 aa).

This sequence belongs to the bacterial ribosomal protein bL28 family.

It localises to the plastid. Its subcellular location is the chloroplast. The polypeptide is Large ribosomal subunit protein bL28c (Pyropia yezoensis (Susabi-nori)).